A 225-amino-acid polypeptide reads, in one-letter code: Ribonuclease HII (225 aa).

An RNase H type-2 domain is found at 35 to 225; that stretch reads GLVAGVDEVG…SFRPCQISLD (191 aa). A divalent metal cation is bound by residues D41, E42, and D137.

Belongs to the RNase HII family. Mn(2+) is required as a cofactor. Requires Mg(2+) as cofactor.

It localises to the cytoplasm. It catalyses the reaction Endonucleolytic cleavage to 5'-phosphomonoester.. Functionally, endonuclease that specifically degrades the RNA of RNA-DNA hybrids. This chain is Ribonuclease HII, found in Trichormus variabilis (strain ATCC 29413 / PCC 7937) (Anabaena variabilis).